The primary structure comprises 395 residues: MKVLVINCGSSSLKYQLIDSVTEQALAVGLCERIGIDGRLTHKSADGEKVVLEDALPNHEVAIKNVIAALMNENYGVIKSLDEINAVGHRVVHGGEKFAHSVVINDEVLNAIEECNDLAPLHNPANLIGINACKSIMPNVPMVAVFDTAFHQTMPKEAYLYGIPFEYYDKYKVRRYGFHGTSHSYVSKRATTLAGLDVNNSKVIVCHLGNGASISAVKNGESVDTSMGLTPLEGLIMGTRSGDLDPAIIDFVAKKENLSLDEVMNILNKKSGVLGMSGVSSDFRDIEAAANEGNEHAKEALAVFAYRVAKYVGSYIVAMNGVDAVVFTAGLGENDKNIRAAVSSHLEFLGVSLDAEKNSQRGKELIISNPDSKVKIMVIPTNEELAICREVVELV.

Asparagine 7 lines the Mg(2+) pocket. ATP is bound at residue lysine 14. Arginine 90 is a binding site for substrate. Aspartate 147 (proton donor/acceptor) is an active-site residue. ATP is bound by residues 207–211 (HLGNG), 282–284 (DFR), and 330–334 (GLGEN). Glutamate 383 serves as a coordination point for Mg(2+).

This sequence belongs to the acetokinase family. In terms of assembly, homodimer. Mg(2+) serves as cofactor. It depends on Mn(2+) as a cofactor.

The protein localises to the cytoplasm. It catalyses the reaction acetate + ATP = acetyl phosphate + ADP. It participates in metabolic intermediate biosynthesis; acetyl-CoA biosynthesis; acetyl-CoA from acetate: step 1/2. Functionally, catalyzes the formation of acetyl phosphate from acetate and ATP. Can also catalyze the reverse reaction. The sequence is that of Acetate kinase from Lachnoclostridium phytofermentans (strain ATCC 700394 / DSM 18823 / ISDg) (Clostridium phytofermentans).